Here is a 127-residue protein sequence, read N- to C-terminus: Large ribosomal subunit protein bL12 (127 aa).

The protein belongs to the bacterial ribosomal protein bL12 family. In terms of assembly, homodimer. Part of the ribosomal stalk of the 50S ribosomal subunit. Forms a multimeric L10(L12)X complex, where L10 forms an elongated spine to which 2 to 4 L12 dimers bind in a sequential fashion. Binds GTP-bound translation factors.

Functionally, forms part of the ribosomal stalk which helps the ribosome interact with GTP-bound translation factors. Is thus essential for accurate translation. This Syntrophobacter fumaroxidans (strain DSM 10017 / MPOB) protein is Large ribosomal subunit protein bL12.